The sequence spans 1059 residues: Transmembrane protease serine 9 (1059 aa).

Residues 1–29 (MEPTVADVHLVPRTTKEVPALDAACCRAA) lie on the Cytoplasmic side of the membrane. The helical; Signal-anchor for type II membrane protein transmembrane segment at 30–50 (SIGVVATSLVVLTLGVLLAFL) threads the bilayer. Residues 51-1059 (STQGFHVDHT…RGWIGQHIQE (1009 aa)) are Extracellular-facing. One can recognise an LDL-receptor class A domain in the interval 153–190 (RCPGNSFSCGNSQCVTKVNPECDDQEDCSDGSDEAHCE). Cystine bridges form between cysteine 154-cysteine 166, cysteine 161-cysteine 180, cysteine 174-cysteine 189, and cysteine 228-cysteine 244. A Peptidase S1 1 domain is found at 203-436 (IVGGMEASPG…LRDWILEATT (234 aa)). Catalysis depends on charge relay system residues histidine 243 and aspartate 292. 3 disulfides stabilise this stretch: cysteine 326-cysteine 393, cysteine 358-cysteine 372, and cysteine 383-cysteine 412. The Charge relay system role is filled by serine 387. A disordered region spans residues 443 to 469 (APTMAPAPAAPSTAWPTSPESPVVSTP). Residues 504–736 (VVGGFGAASG…LKGWILEIMS (233 aa)) enclose the Peptidase S1 2 domain. Residues cysteine 529 and cysteine 545 are joined by a disulfide bond. Catalysis depends on histidine 544, which acts as the Charge relay system. An N-linked (GlcNAc...) asparagine glycan is attached at asparagine 547. The active-site Charge relay system is aspartate 592. Intrachain disulfides connect cysteine 626/cysteine 693, cysteine 658/cysteine 672, and cysteine 683/cysteine 712. Asparagine 638 and asparagine 663 each carry an N-linked (GlcNAc...) asparagine glycan. Serine 687 serves as the catalytic Charge relay system. Residues 758–814 (TTAGLTVPGATPSRPTPGAASRVTGQPANSTLSAVSTTARGQTPFPDAPEATTHTQL) form a disordered region. Residues 780–798 (VTGQPANSTLSAVSTTARG) show a composition bias toward polar residues. A glycan (N-linked (GlcNAc...) asparagine) is linked at asparagine 786. The Peptidase S1 3 domain maps to 827–1058 (IVGGSAAGRG…VRGWIGQHIQ (232 aa)). Disulfide bonds link cysteine 853–cysteine 869, cysteine 949–cysteine 1015, cysteine 980–cysteine 994, and cysteine 1005–cysteine 1034.

It belongs to the peptidase S1 family. Post-translationally, proteolytically cleaved to generate 3 independent serine protease chains. The cleaved chains may remain attached to the membrane thanks to disulfide bonds. It is unclear whether cleavage always takes place. As to expression, expressed in fetal human tissues, such as kidney, liver, lung and brain, and in a variety of tumor cell lines. Weakly expressed in adult tissues including skeletal muscle, liver, placenta and heart.

The protein resides in the cell membrane. With respect to regulation, inhibited by serine protease inhibitors PMSF and 4-(2-aminoethyl)benzenesulfonyl fluoride, but not by EDTA. Functionally, serase-1 and serase-2 are serine proteases that hydrolyze the peptides N-t-Boc-Gln-Ala-Arg-AMC and N-t-Boc-Gln-Gly-Arg-AMC. In contrast, N-t-Boc-Ala-Phe-Lys-AMC and N-t-Boc-Ala-Pro-Ala-AMC are not significantly hydrolyzed. The chain is Transmembrane protease serine 9 (TMPRSS9) from Homo sapiens (Human).